The following is a 138-amino-acid chain: Acidic phospholipase A2 Drk-a1 (138 aa).

An N-terminal signal peptide occupies residues 1 to 16 (MRTLWIVAVCLIGVEG). Cystine bridges form between C42/C131, C44/C60, C59/C111, C65/C138, C66/C104, C73/C97, and C91/C102. 3 residues coordinate Ca(2+): Y43, G45, and G47. H63 is an active-site residue. D64 contacts Ca(2+). D105 is an active-site residue.

The protein belongs to the phospholipase A2 family. Group II subfamily. D49 sub-subfamily. Requires Ca(2+) as cofactor. Expressed by the venom gland.

It localises to the secreted. It catalyses the reaction a 1,2-diacyl-sn-glycero-3-phosphocholine + H2O = a 1-acyl-sn-glycero-3-phosphocholine + a fatty acid + H(+). Snake venom phospholipase A2 (PLA2) that exhibits high hydrolytic activities and shows strong preference for the anionic micelles (dPPC with deoxycholate) to the zwitterionic micelles (dPPC with Triton X-100). PLA2 catalyzes the calcium-dependent hydrolysis of the 2-acyl groups in 3-sn-phosphoglycerides. This is Acidic phospholipase A2 Drk-a1 from Daboia russelii (Russel's viper).